The following is a 261-amino-acid chain: Kynurenine formamidase (261 aa).

Ser-9 is subject to Phosphoserine. The short motif at 36–40 (HGGAW) is the HGGXW element. The active-site Nucleophile is Ser-110. Residues Asp-211 and His-243 contribute to the active site.

The protein belongs to the kynurenine formamidase family. In terms of assembly, homodimer.

It catalyses the reaction N-formyl-L-kynurenine + H2O = L-kynurenine + formate + H(+). The protein operates within amino-acid degradation; L-tryptophan degradation via kynurenine pathway; L-kynurenine from L-tryptophan: step 2/2. Its function is as follows. Catalyzes the hydrolysis of N-formyl-L-kynurenine to L-kynurenine, the second step in the kynurenine pathway of tryptophan degradation. Kynurenine may be further oxidized to nicotinic acid, NAD(H) and NADP(H). Required for elimination of toxic metabolites. The sequence is that of Kynurenine formamidase from Saccharomyces cerevisiae (strain ATCC 204508 / S288c) (Baker's yeast).